Here is a 220-residue protein sequence, read N- to C-terminus: Probable septum site-determining protein MinC (220 aa).

The protein belongs to the MinC family. As to quaternary structure, interacts with MinD and FtsZ.

In terms of biological role, cell division inhibitor that blocks the formation of polar Z ring septums. Rapidly oscillates between the poles of the cell to destabilize FtsZ filaments that have formed before they mature into polar Z rings. Prevents FtsZ polymerization. The sequence is that of Probable septum site-determining protein MinC from Vibrio vulnificus (strain CMCP6).